Reading from the N-terminus, the 573-residue chain is Eukaryotic translation initiation factor 3 subunit D (573 aa).

A disordered region spans residues 111–162 (VFTRGGRGQRGARGTERGGRAQLSRGRGGQYGGGYDRGGRSAAGGRGGRRFG). Over residues 136 to 156 (GRGGQYGGGYDRGGRSAAGGR) the composition is skewed to gly residues. Residues 301-315 (ALDMVTVNENAVDAP) form an RNA gate region. Residues 552-573 (PAGGLDEEEDNGDLGQEEDDEE) are disordered. Positions 556–573 (LDEEEDNGDLGQEEDDEE) are enriched in acidic residues.

This sequence belongs to the eIF-3 subunit D family. Component of the eukaryotic translation initiation factor 3 (eIF-3) complex.

It is found in the cytoplasm. In terms of biological role, mRNA cap-binding component of the eukaryotic translation initiation factor 3 (eIF-3) complex, which is involved in protein synthesis of a specialized repertoire of mRNAs and, together with other initiation factors, stimulates binding of mRNA and methionyl-tRNAi to the 40S ribosome. The eIF-3 complex specifically targets and initiates translation of a subset of mRNAs involved in cell proliferation. In the eIF-3 complex, eif3d specifically recognizes and binds the 7-methylguanosine cap of a subset of mRNAs. The protein is Eukaryotic translation initiation factor 3 subunit D of Pyricularia oryzae (strain 70-15 / ATCC MYA-4617 / FGSC 8958) (Rice blast fungus).